A 1897-amino-acid chain; its full sequence is Spectinabilin polyketide synthase system protein NorA (1897 aa).

Residues E112–Q536 form the Ketosynthase family 3 (KS3) domain. Residues C283, H418, and H458 each act as for beta-ketoacyl synthase activity in the active site. The disordered stretch occupies residues A538–H563. Over residues E540 to P553 the composition is skewed to basic and acidic residues. The 319-residue stretch at F644–A962 folds into the Malonyl-CoA:ACP transacylase (MAT) domain. Residues H1012–P1139 are N-terminal hotdog fold. Residues H1012 to H1289 form the PKS/mFAS DH domain. H1045 (proton acceptor; for dehydratase activity) is an active-site residue. The disordered stretch occupies residues S1113–R1152. The tract at residues A1151–H1289 is C-terminal hotdog fold. Catalysis depends on D1211, which acts as the Proton donor; for dehydratase activity. A Ketoreductase (KR) domain is found at G1494–A1671. Residues A1777 to L1852 enclose the Carrier domain. At S1812 the chain carries O-(pantetheine 4'-phosphoryl)serine. Residues P1854–D1873 form a disordered region. Over residues A1862–Q1871 the composition is skewed to low complexity.

As to quaternary structure, the spectinabilin polyketide synthase complex is composed of 4 proteins, NorA, NorA', NorB and NorC. The complex comprises 6 modules with a total of 28 catalytic domains catalyzing 7 chain elongations. NorA comprises one module, NorA' two modules, NorB one module and NorC two modules. Requires pantetheine 4'-phosphate as cofactor.

The catalysed reaction is 4-nitrobenzoyl-CoA + 6 (S)-methylmalonyl-CoA + malonyl-CoA + 6 NADPH + 12 H(+) = demethyldeoxyspectinabilin + 7 CO2 + 6 NADP(+) + 8 CoA + 5 H2O. It functions in the pathway antibiotic biosynthesis. It participates in polyketide biosynthesis. Component of a type I modular polyketide synthase (PKS) that generates the backbone of the antibiotic spectinabilin (also known as neoaureothin), a nitroaryl-substituted polyketide metabolite. This PKS system accepts the unusual starter unit 4-nitrobenzoyl-CoA and extends it by 6 molecules of (S)-methylmalonyl-CoA and a single molecule of malonyl-CoA. The first module, NorA, is used twice in an iterative fashion. The protein is Spectinabilin polyketide synthase system protein NorA of Streptomyces orinoci (Streptoverticillium orinoci).